A 268-amino-acid polypeptide reads, in one-letter code: Secreted RxLR effector protein 6 (268 aa).

An N-terminal signal peptide occupies residues 1–19; sequence MRGAFYIAIALLVVRSRTA. The short motif at 48-63 is the RxLR-dEER element; that stretch reads RYLRDGLAHSAANEER. Positions 90 to 123 are disordered; it reads IGGHSHTPKSKRKVNLSPAKSQSGIRKKSTSINK. The span at 107 to 123 shows a compositional bias: polar residues; the sequence is PAKSQSGIRKKSTSINK.

Belongs to the RxLR effector family.

It localises to the secreted. Its subcellular location is the host nucleus. The protein resides in the host cytoplasm. In terms of biological role, secreted effector that completely suppresses the host cell death induced by cell death-inducing proteins. The sequence is that of Secreted RxLR effector protein 6 from Plasmopara viticola (Downy mildew of grapevine).